An 843-amino-acid chain; its full sequence is Ribosome biogenesis protein ERB1 (843 aa).

Disordered stretches follow at residues 36 to 189 and 364 to 419; these read KKAA…RYIY and ADES…REYL. Composition is skewed to acidic residues over residues 77-92, 106-139, and 163-172; these read VDED…YDLE, SDSE…EVPS, and ESNDLSDDNE. Residues 173-183 are compositionally biased toward basic and acidic residues; that stretch reads PNYRIEKDANG. Residues 379–396 are compositionally biased toward pro residues; the sequence is PKLPPPGYEESYHPPPEY. The span at 397–406 shows a compositional bias: basic and acidic residues; it reads LPDKKEKEEW. WD repeat units follow at residues 487-526, 530-570, 668-706, 709-754, 758-797, and 813-843; these read GHRG…QLWS, SDED…LELE, KGGG…LVKI, PGAR…RPYK, YHQK…DLLS, and TGDL…RLWM.

It belongs to the WD repeat BOP1/ERB1 family. Component of the NOP7 complex, composed of ERB1, NOP7 and YTM1. The complex is held together by ERB1, which interacts with NOP7 via its N-terminal domain and with YTM1 via a high-affinity interaction between the seven-bladed beta-propeller domains of the 2 proteins. The NOP7 complex associates with the 66S pre-ribosome.

It localises to the nucleus. The protein resides in the nucleolus. The protein localises to the nucleoplasm. Its function is as follows. Component of the NOP7 complex, which is required for maturation of the 25S and 5.8S ribosomal RNAs and formation of the 60S ribosome. This Coccidioides immitis (strain RS) (Valley fever fungus) protein is Ribosome biogenesis protein ERB1.